Reading from the N-terminus, the 643-residue chain is Macrolide export ATP-binding/permease protein MacB (643 aa).

The 239-residue stretch at 4-242 (IEIKELNRYF…VNNQSKAKSR (239 aa)) folds into the ABC transporter domain. Residue 40–47 (GQSGSGKS) coordinates ATP. A run of 4 helical transmembrane segments spans residues 269–289 (LLTMLGIIIGITSVVSVVALG), 523–543 (IAFISLIVGGIGVMNIMLVSV), 572–592 (ILICMIGGISGIMLSLIIGGI), and 603–623 (VFSTFSIVAAVLCSTLIGVIF).

The protein belongs to the ABC transporter superfamily. Macrolide exporter (TC 3.A.1.122) family. In terms of assembly, homodimer. Part of the tripartite efflux system MacAB-TolC, which is composed of an inner membrane transporter, MacB, a periplasmic membrane fusion protein, MacA, and an outer membrane component, TolC. The complex forms a large protein conduit and can translocate molecules across both the inner and outer membranes. Interacts with MacA.

Its subcellular location is the cell inner membrane. Part of the tripartite efflux system MacAB-TolC. MacB is a non-canonical ABC transporter that contains transmembrane domains (TMD), which form a pore in the inner membrane, and an ATP-binding domain (NBD), which is responsible for energy generation. Confers resistance against macrolides. This chain is Macrolide export ATP-binding/permease protein MacB, found in Mannheimia succiniciproducens (strain KCTC 0769BP / MBEL55E).